A 366-amino-acid chain; its full sequence is 3-dehydroquinate synthase (366 aa).

Residues 71–76 (DGEQYK), 105–109 (GVIGD), 129–130 (TT), K142, K151, and 169–172 (CLQT) contribute to the NAD(+) site. Residues E184, H248, and H265 each contribute to the Zn(2+) site.

This sequence belongs to the sugar phosphate cyclases superfamily. Dehydroquinate synthase family. Requires NAD(+) as cofactor. Co(2+) serves as cofactor. The cofactor is Zn(2+).

Its subcellular location is the cytoplasm. The enzyme catalyses 7-phospho-2-dehydro-3-deoxy-D-arabino-heptonate = 3-dehydroquinate + phosphate. Its pathway is metabolic intermediate biosynthesis; chorismate biosynthesis; chorismate from D-erythrose 4-phosphate and phosphoenolpyruvate: step 2/7. Functionally, catalyzes the conversion of 3-deoxy-D-arabino-heptulosonate 7-phosphate (DAHP) to dehydroquinate (DHQ). This is 3-dehydroquinate synthase from Photorhabdus laumondii subsp. laumondii (strain DSM 15139 / CIP 105565 / TT01) (Photorhabdus luminescens subsp. laumondii).